The primary structure comprises 223 residues: Ribose-5-phosphate isomerase A (223 aa).

Residues 29 to 32 (TGST), 82 to 85 (DGAD), and 95 to 98 (KGGG) each bind substrate. The Proton acceptor role is filled by Glu104. Substrate is bound at residue Lys122.

This sequence belongs to the ribose 5-phosphate isomerase family. Homodimer.

The enzyme catalyses aldehydo-D-ribose 5-phosphate = D-ribulose 5-phosphate. It participates in carbohydrate degradation; pentose phosphate pathway; D-ribose 5-phosphate from D-ribulose 5-phosphate (non-oxidative stage): step 1/1. Catalyzes the reversible conversion of ribose-5-phosphate to ribulose 5-phosphate. This chain is Ribose-5-phosphate isomerase A, found in Neisseria meningitidis serogroup C / serotype 2a (strain ATCC 700532 / DSM 15464 / FAM18).